A 193-amino-acid chain; its full sequence is ECF RNA polymerase sigma factor SigK (193 aa).

A sigma-70 factor domain-2 region spans residues 35–101 (LYDRTRSRVY…RRAVDRVRSE (67 aa)). Positions 59 to 62 (ETTQ) match the Polymerase core binding motif. The interval 140–187 (MGSLSDLQREAIQLAYYEGLTYVQVSERLSANLATIKSRMRGGIRGLK) is sigma-70 factor domain-4. The segment at residues 161–180 (YVQVSERLSANLATIKSRMR) is a DNA-binding region (H-T-H motif).

The protein belongs to the sigma-70 factor family. ECF subfamily. Interacts transiently with the RNA polymerase catalytic core formed by RpoA, RpoB, RpoC and RpoZ (2 alpha, 1 beta, 1 beta' and 1 omega subunit) to form the RNA polymerase holoenzyme that can initiate transcription. Interacts (via sigma-70 factor domain 4) with anti-sigma-K factor RskA.

Sigma factors are initiation factors that promote the attachment of RNA polymerase to specific initiation sites and are then released. Extracytoplasmic function (ECF) sigma factors are held in an inactive form by an anti-sigma factor until released by regulated intramembrane proteolysis. In Mycobacterium sp. (strain KMS), this protein is ECF RNA polymerase sigma factor SigK (sigK).